Consider the following 431-residue polypeptide: MKIIDWNQLDTAAQAKTLTRPAQTIATQTREAVTALIEQVRRGGDTALRDITARFDGVDLATFEVTAAELAAAATAVAPELQHAMQTAAARIEAFHRAGMTNDYRVETAPGVVCERLVRPIARVGLYVPAGSAPLFSTALMLGVPARLAGCREVVLCTPPSKDGRANPAVLLAARLTGVTRVFTLGGAQAIAAMAYGTASVPTCDKVFGPGNSFVTEAKQQLAQAGVVAIDMPAGPSEVLVIADAAANPAFIAADLLSQAEHGPDSQVLLLSDSDALMTAVQNALALQLQQLSRAEIARQALAHSRFIKVATLETAFDISNRYAPEHLILALRQPRAWLHRVAAAGSVFLGDYTPEALGDYCSGTNHVLPTGGAARAYSGVSVSSFQNMISVQAASRSGIAEIGGCALTLARAEGLDAHANAVALRMGSAP.

Residues Tyr-127, Gln-189, and Asn-212 each coordinate NAD(+). 3 residues coordinate substrate: Ser-237, Gln-259, and His-262. Zn(2+)-binding residues include Gln-259 and His-262. Catalysis depends on proton acceptor residues Glu-326 and His-327. His-327, Asp-360, Glu-414, and His-419 together coordinate substrate. Asp-360 contributes to the Zn(2+) binding site. His-419 lines the Zn(2+) pocket.

This sequence belongs to the histidinol dehydrogenase family. The cofactor is Zn(2+).

It carries out the reaction L-histidinol + 2 NAD(+) + H2O = L-histidine + 2 NADH + 3 H(+). It functions in the pathway amino-acid biosynthesis; L-histidine biosynthesis; L-histidine from 5-phospho-alpha-D-ribose 1-diphosphate: step 9/9. In terms of biological role, catalyzes the sequential NAD-dependent oxidations of L-histidinol to L-histidinaldehyde and then to L-histidine. This Xylella fastidiosa (strain Temecula1 / ATCC 700964) protein is Histidinol dehydrogenase.